We begin with the raw amino-acid sequence, 306 residues long: Acetyl-coenzyme A carboxylase carboxyl transferase subunit beta (306 aa).

The CoA carboxyltransferase N-terminal domain maps to 25 to 294; sequence LWIKDPTSGE…VFNPSDPSPT (270 aa). Residues 286–306 form a disordered region; the sequence is FNPSDPSPTDSQTSLSTTKAA. Residues 288 to 306 show a composition bias toward low complexity; sequence PSDPSPTDSQTSLSTTKAA.

It belongs to the AccD/PCCB family. As to quaternary structure, acetyl-CoA carboxylase is a heterohexamer composed of biotin carboxyl carrier protein (AccB), biotin carboxylase (AccC) and two subunits each of ACCase subunit alpha (AccA) and ACCase subunit beta (AccD).

The protein localises to the cytoplasm. The catalysed reaction is N(6)-carboxybiotinyl-L-lysyl-[protein] + acetyl-CoA = N(6)-biotinyl-L-lysyl-[protein] + malonyl-CoA. Its pathway is lipid metabolism; malonyl-CoA biosynthesis; malonyl-CoA from acetyl-CoA: step 1/1. Its function is as follows. Component of the acetyl coenzyme A carboxylase (ACC) complex. Biotin carboxylase (BC) catalyzes the carboxylation of biotin on its carrier protein (BCCP) and then the CO(2) group is transferred by the transcarboxylase to acetyl-CoA to form malonyl-CoA. The protein is Acetyl-coenzyme A carboxylase carboxyl transferase subunit beta of Bartonella grahamii (strain as4aup).